A 34-amino-acid polypeptide reads, in one-letter code: Photosystem I reaction center subunit XII (34 aa).

Residues 4–24 (VLSAPEVFIALVVAAHAAVLA) form a helical membrane-spanning segment.

Belongs to the PsaM family.

The protein resides in the cellular thylakoid membrane. The sequence is that of Photosystem I reaction center subunit XII from Synechococcus sp. (strain CC9605).